Reading from the N-terminus, the 197-residue chain is Transposon Tn552 resolvase (197 aa).

Positions 1–136 (MKIGYARVST…AGRIAARARG (136 aa)) constitute a Resolvase/invertase-type recombinase catalytic domain. The active-site O-(5'-phospho-DNA)-serine intermediate is Ser9. Positions 163 to 182 (IKTIAEQWQVSRTTIYRYLN) form a DNA-binding region, H-T-H motif.

This sequence belongs to the site-specific recombinase resolvase family.

Resolvase catalyzes the resolution (a site-specific recombination) of the cointegrated replicon to yield the final transposition products. This chain is Transposon Tn552 resolvase (tnpR), found in Staphylococcus aureus.